Reading from the N-terminus, the 419-residue chain is Menaquinone reductase, integral membrane subunit (419 aa).

The next 10 membrane-spanning stretches (helical) occupy residues 23–43 (LSKFMMWMAFVFVFFGWGLYA), 61–81 (FGFGLWITFDLAVIALGAGAF), 98–118 (IINLAVIIGFLCYSGAMLVLV), 143–163 (VIFCITCYCLVLIIEYVPLIL), 176–196 (AVAHNFHVMMPLFAGIGAFLS), 221–241 (FFIWPWTFFLYVLSAVGSGPV), 270–290 (IAGTMLMVYLIFKFADTYAWA), 316–336 (LWAELFYCGLVPAIILIVPAL), 341–361 (VLFYSAAILDCIGITINRYVM), and 383–403 (WAEWGASVMIVAYAALVLSLS).

The protein belongs to the NrfD family. The Qrc complex is composed of four subunits: QrcA, QrcB, QrcC and QrcD. Can form a supercomplex with the [NiFe] hydrogenase HynA1 and the tetraheme Type I cytochrome c3 TpIc(3), its physiological electron donors.

The protein localises to the cell inner membrane. Component of the respiratory Qrc complex, that catalyzes the reduction of the menaquinone pool using electrons transferred from the reduced periplasmic cytochrome c3, and which is probably involved in sulfate respiration. Is likely essential for growth on H(2) or formate since the periplasmic hydrogenases and/or formate dehydrogenases act as primary electron donors for the Qrc complex. The QrcD subunit anchors the protein complex to the membrane and likely interacts with the quinone pool. In Nitratidesulfovibrio vulgaris (strain ATCC 29579 / DSM 644 / CCUG 34227 / NCIMB 8303 / VKM B-1760 / Hildenborough) (Desulfovibrio vulgaris), this protein is Menaquinone reductase, integral membrane subunit.